The primary structure comprises 395 residues: Acetate kinase (395 aa).

Asn-8 provides a ligand contact to Mg(2+). An ATP-binding site is contributed by Lys-15. Arg-94 serves as a coordination point for substrate. Catalysis depends on Asp-151, which acts as the Proton donor/acceptor. Residues 210-214, 284-286, and 329-333 contribute to the ATP site; these read HLGNG, DMR, and GIGEN. Mg(2+) is bound at residue Glu-382.

It belongs to the acetokinase family. Homodimer. The cofactor is Mg(2+). Mn(2+) serves as cofactor.

It is found in the cytoplasm. The catalysed reaction is acetate + ATP = acetyl phosphate + ADP. Its pathway is metabolic intermediate biosynthesis; acetyl-CoA biosynthesis; acetyl-CoA from acetate: step 1/2. Functionally, catalyzes the formation of acetyl phosphate from acetate and ATP. Can also catalyze the reverse reaction. The protein is Acetate kinase of Protochlamydia amoebophila (strain UWE25).